The chain runs to 871 residues: Probable inorganic carbon transporter subunit DabA (871 aa).

Zn(2+) contacts are provided by cysteine 396, aspartate 398, histidine 577, and cysteine 592.

This sequence belongs to the inorganic carbon transporter (TC 9.A.2) DabA family. Forms a complex with DabB. It depends on Zn(2+) as a cofactor.

The protein localises to the cell membrane. Functionally, part of an energy-coupled inorganic carbon pump. The chain is Probable inorganic carbon transporter subunit DabA from Bacillus subtilis (strain 168).